Here is a 302-residue protein sequence, read N- to C-terminus: 4-diphosphocytidyl-2-C-methyl-D-erythritol kinase (302 aa).

Lys-20 is a catalytic residue. 106–116 is an ATP binding site; the sequence is PVASGVGGGSG. Residue Asp-148 is part of the active site.

This sequence belongs to the GHMP kinase family. IspE subfamily.

The enzyme catalyses 4-CDP-2-C-methyl-D-erythritol + ATP = 4-CDP-2-C-methyl-D-erythritol 2-phosphate + ADP + H(+). The protein operates within isoprenoid biosynthesis; isopentenyl diphosphate biosynthesis via DXP pathway; isopentenyl diphosphate from 1-deoxy-D-xylulose 5-phosphate: step 3/6. Its function is as follows. Catalyzes the phosphorylation of the position 2 hydroxy group of 4-diphosphocytidyl-2C-methyl-D-erythritol. This is 4-diphosphocytidyl-2-C-methyl-D-erythritol kinase from Bartonella henselae (strain ATCC 49882 / DSM 28221 / CCUG 30454 / Houston 1) (Rochalimaea henselae).